The following is a 508-amino-acid chain: Bifunctional purine biosynthesis protein PurH (508 aa).

The MGS-like domain maps to 1 to 144; the sequence is MTRALLSVSD…KNFASVLPIV (144 aa).

The protein belongs to the PurH family.

The catalysed reaction is (6R)-10-formyltetrahydrofolate + 5-amino-1-(5-phospho-beta-D-ribosyl)imidazole-4-carboxamide = 5-formamido-1-(5-phospho-D-ribosyl)imidazole-4-carboxamide + (6S)-5,6,7,8-tetrahydrofolate. It catalyses the reaction IMP + H2O = 5-formamido-1-(5-phospho-D-ribosyl)imidazole-4-carboxamide. Its pathway is purine metabolism; IMP biosynthesis via de novo pathway; 5-formamido-1-(5-phospho-D-ribosyl)imidazole-4-carboxamide from 5-amino-1-(5-phospho-D-ribosyl)imidazole-4-carboxamide (10-formyl THF route): step 1/1. It participates in purine metabolism; IMP biosynthesis via de novo pathway; IMP from 5-formamido-1-(5-phospho-D-ribosyl)imidazole-4-carboxamide: step 1/1. This Leuconostoc mesenteroides subsp. mesenteroides (strain ATCC 8293 / DSM 20343 / BCRC 11652 / CCM 1803 / JCM 6124 / NCDO 523 / NBRC 100496 / NCIMB 8023 / NCTC 12954 / NRRL B-1118 / 37Y) protein is Bifunctional purine biosynthesis protein PurH.